Consider the following 608-residue polypeptide: Protein FAM151A (608 aa).

Residues W14–L34 traverse the membrane as a helical segment. Positions R588–R608 are disordered.

Belongs to the menorin family.

The protein localises to the membrane. The chain is Protein FAM151A (Fam151a) from Rattus norvegicus (Rat).